We begin with the raw amino-acid sequence, 253 residues long: Triosephosphate isomerase (253 aa).

A substrate-binding site is contributed by 9 to 11 (NWK). The active-site Electrophile is the H97. The Proton acceptor role is filled by E169. Residues G175, S215, and 236–237 (GG) each bind substrate.

Belongs to the triosephosphate isomerase family. As to quaternary structure, homodimer.

Its subcellular location is the cytoplasm. It catalyses the reaction D-glyceraldehyde 3-phosphate = dihydroxyacetone phosphate. It participates in carbohydrate biosynthesis; gluconeogenesis. It functions in the pathway carbohydrate degradation; glycolysis; D-glyceraldehyde 3-phosphate from glycerone phosphate: step 1/1. Functionally, involved in the gluconeogenesis. Catalyzes stereospecifically the conversion of dihydroxyacetone phosphate (DHAP) to D-glyceraldehyde-3-phosphate (G3P). The sequence is that of Triosephosphate isomerase from Staphylococcus epidermidis (strain ATCC 35984 / DSM 28319 / BCRC 17069 / CCUG 31568 / BM 3577 / RP62A).